A 141-amino-acid polypeptide reads, in one-letter code: Small ribosomal subunit protein eS12 (141 aa).

The protein belongs to the eukaryotic ribosomal protein eS12 family. As to quaternary structure, component of the small ribosomal subunit. Mature ribosomes consist of a small (40S) and a large (60S) subunit. The 40S subunit contains about 32 different proteins and 1 molecule of RNA (18S). The 60S subunit contains about 42 different proteins and 3 molecules of RNA (28S, 5.8S and 5S).

The protein resides in the cytoplasm. In terms of biological role, component of the ribosome, a large ribonucleoprotein complex responsible for the synthesis of proteins in the cell. The small ribosomal subunit (SSU) binds messenger RNAs (mRNAs) and translates the encoded message by selecting cognate aminoacyl-transfer RNA (tRNA) molecules. The large subunit (LSU) contains the ribosomal catalytic site termed the peptidyl transferase center (PTC), which catalyzes the formation of peptide bonds, thereby polymerizing the amino acids delivered by tRNAs into a polypeptide chain. The nascent polypeptides leave the ribosome through a tunnel in the LSU and interact with protein factors that function in enzymatic processing, targeting, and the membrane insertion of nascent chains at the exit of the ribosomal tunnel. This chain is Small ribosomal subunit protein eS12, found in Plasmodium falciparum (isolate 3D7).